The following is a 266-amino-acid chain: Methionine aminopeptidase (266 aa).

Substrate is bound at residue histidine 80. The a divalent metal cation site is built by aspartate 98, aspartate 109, and histidine 172. Histidine 179 provides a ligand contact to substrate. A divalent metal cation is bound by residues glutamate 206 and glutamate 237.

It belongs to the peptidase M24A family. Methionine aminopeptidase type 1 subfamily. Monomer. Requires Co(2+) as cofactor. Zn(2+) is required as a cofactor. The cofactor is Mn(2+). It depends on Fe(2+) as a cofactor.

It catalyses the reaction Release of N-terminal amino acids, preferentially methionine, from peptides and arylamides.. Removes the N-terminal methionine from nascent proteins. The N-terminal methionine is often cleaved when the second residue in the primary sequence is small and uncharged (Met-Ala-, Cys, Gly, Pro, Ser, Thr, or Val). Requires deformylation of the N(alpha)-formylated initiator methionine before it can be hydrolyzed. The protein is Methionine aminopeptidase of Buchnera aphidicola subsp. Baizongia pistaciae (strain Bp).